We begin with the raw amino-acid sequence, 177 residues long: uncharacterized protein (177 aa).

The interval 1–27 is disordered; that stretch reads MSHSRRAAPTQDQCHTPGFPTSRETSG.

This is an uncharacterized protein from Homo sapiens (Human).